The primary structure comprises 551 residues: Podocalyxin (551 aa).

The N-terminal stretch at 1–21 (MRSALALAALLLLLLSPPSLS) is a signal peptide. Positions 18–324 (PSLSQEKSPQ…QRVSCGPPER (307 aa)) are disordered. Over 22–452 (QEKSPQPGPT…PPEETEDRFS (431 aa)) the chain is Extracellular. A compositionally biased stretch (low complexity) spans 32-59 (PMATSTSTRPAPASAPAPKSSVAASVPA). The segment covering 60–90 (EQNTTPMTTKAPATQSPSASPGSSVENSAPA) has biased composition (polar residues). Low complexity predominate over residues 91-104 (QGSTTTQQSLSVTT). The segment covering 142–164 (APSNHSITTKPLATEATSQAPRQ) has biased composition (polar residues). Residues N145 and N180 are each glycosylated (N-linked (GlcNAc...) asparagine). A compositionally biased stretch (polar residues) spans 234 to 244 (PVASSAETQGM). Residues 289–300 (TSSSTELASTAL) are compositionally biased toward low complexity. N333 is a glycosylation site (N-linked (GlcNAc...) asparagine). The helical transmembrane segment at 453 to 473 (LPLIITIVCMASFLLLVAALY) threads the bilayer. The Cytoplasmic portion of the chain corresponds to 474 to 551 (GCCHQRLSHR…DLDEEEDTHL (78 aa)). T511 bears the Phosphothreonine mark. S530 carries the phosphoserine modification. T549 carries the phosphothreonine modification.

The protein belongs to the podocalyxin family. As to quaternary structure, monomer; when associated with the membrane raft. Oligomer; when integrated in the apical membrane. Found in a complex with EZR, PODXL and NHERF2. Associates with the actin cytoskeleton through complex formation with EZR and NHERF2. Interacts (via the C-terminal PDZ-binding motif DTHL) with NHERF1 (via the PDZ domains); interaction is not detected in glomerular epithelium cells, take place early in the secretory pathway and is necessary for its apical membrane sorting. Interacts (via the C-terminal PDZ-binding motif DTHL) with NHERF2 (via the PDZ 1 domain); interaction is detected in glomerular epithelium cells. Interacts with EZR. In terms of processing, N- and O-linked glycosylated. Sialoglycoprotein. In terms of tissue distribution, glomerular epithelium cell (podocyte) and endothelial cells.

It localises to the apical cell membrane. The protein localises to the cell projection. It is found in the microvillus. Its subcellular location is the membrane raft. The protein resides in the lamellipodium. It localises to the filopodium. The protein localises to the ruffle. It is found in the membrane. Functionally, involved in the regulation of both adhesion and cell morphology and cancer progression. Functions as an anti-adhesive molecule that maintains an open filtration pathway between neighboring foot processes in the podocyte by charge repulsion. Acts as a pro-adhesive molecule, enhancing the adherence of cells to immobilized ligands, increasing the rate of migration and cell-cell contacts in an integrin-dependent manner. Induces the formation of apical actin-dependent microvilli. Involved in the formation of a preapical plasma membrane subdomain to set up initial epithelial polarization and the apical lumen formation during renal tubulogenesis. Plays a role in cancer development and aggressiveness by inducing cell migration and invasion through its interaction with the actin-binding protein EZR. Affects EZR-dependent signaling events, leading to increased activities of the MAPK and PI3K pathways in cancer cells. The chain is Podocalyxin (PODXL) from Oryctolagus cuniculus (Rabbit).